Reading from the N-terminus, the 646-residue chain is Exoribonuclease 2 (646 aa).

The region spanning 191–518 (RIDLTALDFV…NHRLLKAIIQ (328 aa)) is the RNB domain. Positions 563–645 (DKTFSAEIVD…ETRNIVARPV (83 aa)) constitute an S1 motif domain.

This sequence belongs to the RNR ribonuclease family. RNase II subfamily.

Its subcellular location is the cytoplasm. It carries out the reaction Exonucleolytic cleavage in the 3'- to 5'-direction to yield nucleoside 5'-phosphates.. Its function is as follows. Involved in mRNA degradation. Hydrolyzes single-stranded polyribonucleotides processively in the 3' to 5' direction. The polypeptide is Exoribonuclease 2 (Xenorhabdus bovienii (strain SS-2004) (Xenorhabdus nematophila subsp. bovienii)).